We begin with the raw amino-acid sequence, 379 residues long: Cytochrome b (379 aa).

4 helical membrane-spanning segments follow: residues 33 to 53 (FGSL…FLAM), 77 to 98 (WLIR…YLHI), 113 to 133 (WNIG…GYVL), and 178 to 198 (FFAF…LHLL). Positions 83 and 97 each coordinate heme b. Positions 182 and 196 each coordinate heme b. His-201 is a binding site for a ubiquinone. The next 4 helical transmembrane spans lie at 226–246 (YKDL…ALFY), 288–308 (LGGV…PILH), 320–340 (ASQL…WIGG), and 347–367 (YIII…VLNP).

Belongs to the cytochrome b family. As to quaternary structure, the cytochrome bc1 complex contains 3 respiratory subunits (MT-CYB, CYC1 and UQCRFS1), 2 core proteins (UQCRC1 and UQCRC2) and probably 6 low-molecular weight proteins. It depends on heme b as a cofactor.

The protein resides in the mitochondrion inner membrane. Functionally, component of the ubiquinol-cytochrome c reductase complex (complex III or cytochrome b-c1 complex) that is part of the mitochondrial respiratory chain. The b-c1 complex mediates electron transfer from ubiquinol to cytochrome c. Contributes to the generation of a proton gradient across the mitochondrial membrane that is then used for ATP synthesis. The polypeptide is Cytochrome b (mt-cyb) (Anguilla anguilla (European freshwater eel)).